The chain runs to 86 residues: Small ribosomal subunit protein bS20 (86 aa).

This sequence belongs to the bacterial ribosomal protein bS20 family.

Functionally, binds directly to 16S ribosomal RNA. In Rhodococcus erythropolis (strain PR4 / NBRC 100887), this protein is Small ribosomal subunit protein bS20.